The sequence spans 119 residues: Protein TusC (119 aa).

Belongs to the DsrF/TusC family. As to quaternary structure, heterohexamer, formed by a dimer of trimers. The hexameric TusBCD complex contains 2 copies each of TusB, TusC and TusD. The TusBCD complex interacts with TusE.

It localises to the cytoplasm. Functionally, part of a sulfur-relay system required for 2-thiolation of 5-methylaminomethyl-2-thiouridine (mnm(5)s(2)U) at tRNA wobble positions. The chain is Protein TusC from Shigella sonnei (strain Ss046).